The primary structure comprises 182 residues: uncharacterized protein (182 aa).

Its subcellular location is the plastid. It localises to the cyanelle. This is an uncharacterized protein from Cyanophora paradoxa.